The chain runs to 232 residues: Nucleoside diphosphate kinase 2, chloroplastic (232 aa).

The transit peptide at 1–79 (MGCLSVVGAS…TRIFLPHLVA (79 aa)) directs the protein to the chloroplast. Lys-92, Phe-140, Arg-168, Thr-174, Arg-185, and Asn-195 together coordinate ATP. His-198 serves as the catalytic Pros-phosphohistidine intermediate.

The protein belongs to the NDK family. It depends on Mg(2+) as a cofactor.

The protein resides in the plastid. The protein localises to the chloroplast. The enzyme catalyses a 2'-deoxyribonucleoside 5'-diphosphate + ATP = a 2'-deoxyribonucleoside 5'-triphosphate + ADP. The catalysed reaction is a ribonucleoside 5'-diphosphate + ATP = a ribonucleoside 5'-triphosphate + ADP. Its function is as follows. Major role in the synthesis of nucleoside triphosphates other than ATP. The ATP gamma phosphate is transferred to the NDP beta phosphate via a ping-pong mechanism, using a phosphorylated active-site intermediate. The polypeptide is Nucleoside diphosphate kinase 2, chloroplastic (Nicotiana tabacum (Common tobacco)).